Here is a 164-residue protein sequence, read N- to C-terminus: NADH-quinone oxidoreductase subunit B (164 aa).

The [4Fe-4S] cluster site is built by cysteine 38, cysteine 39, cysteine 104, and cysteine 133.

Belongs to the complex I 20 kDa subunit family. In terms of assembly, NDH-1 is composed of 14 different subunits. Subunits NuoB, C, D, E, F, and G constitute the peripheral sector of the complex. It depends on [4Fe-4S] cluster as a cofactor.

It localises to the cell inner membrane. It catalyses the reaction a quinone + NADH + 5 H(+)(in) = a quinol + NAD(+) + 4 H(+)(out). Functionally, NDH-1 shuttles electrons from NADH, via FMN and iron-sulfur (Fe-S) centers, to quinones in the respiratory chain. The immediate electron acceptor for the enzyme in this species is believed to be ubiquinone. Couples the redox reaction to proton translocation (for every two electrons transferred, four hydrogen ions are translocated across the cytoplasmic membrane), and thus conserves the redox energy in a proton gradient. In Protochlamydia amoebophila (strain UWE25), this protein is NADH-quinone oxidoreductase subunit B.